The primary structure comprises 292 residues: 4-hydroxy-tetrahydrodipicolinate synthase (292 aa).

Thr45 provides a ligand contact to pyruvate. Tyr133 serves as the catalytic Proton donor/acceptor. Lys161 serves as the catalytic Schiff-base intermediate with substrate. Pyruvate is bound at residue Ile203.

The protein belongs to the DapA family. Homotetramer; dimer of dimers.

It is found in the cytoplasm. It catalyses the reaction L-aspartate 4-semialdehyde + pyruvate = (2S,4S)-4-hydroxy-2,3,4,5-tetrahydrodipicolinate + H2O + H(+). Its pathway is amino-acid biosynthesis; L-lysine biosynthesis via DAP pathway; (S)-tetrahydrodipicolinate from L-aspartate: step 3/4. Its function is as follows. Catalyzes the condensation of (S)-aspartate-beta-semialdehyde [(S)-ASA] and pyruvate to 4-hydroxy-tetrahydrodipicolinate (HTPA). The polypeptide is 4-hydroxy-tetrahydrodipicolinate synthase (Aromatoleum aromaticum (strain DSM 19018 / LMG 30748 / EbN1) (Azoarcus sp. (strain EbN1))).